We begin with the raw amino-acid sequence, 341 residues long: L-threonine 3-dehydrogenase (341 aa).

Cys-38 lines the Zn(2+) pocket. Active-site charge relay system residues include Thr-40 and His-43. Zn(2+) is bound by residues His-63, Glu-64, Cys-93, Cys-96, Cys-99, and Cys-107. Residues Ile-175, Asp-195, Arg-200, Leu-262–Ile-264, and Ile-286–Tyr-287 contribute to the NAD(+) site.

This sequence belongs to the zinc-containing alcohol dehydrogenase family. As to quaternary structure, homotetramer. It depends on Zn(2+) as a cofactor.

It is found in the cytoplasm. The enzyme catalyses L-threonine + NAD(+) = (2S)-2-amino-3-oxobutanoate + NADH + H(+). Its pathway is amino-acid degradation; L-threonine degradation via oxydo-reductase pathway; glycine from L-threonine: step 1/2. Functionally, catalyzes the NAD(+)-dependent oxidation of L-threonine to 2-amino-3-ketobutyrate. The sequence is that of L-threonine 3-dehydrogenase from Salmonella typhi.